The following is an 86-amino-acid chain: Small ribosomal subunit protein uS17 (86 aa).

The protein belongs to the universal ribosomal protein uS17 family. As to quaternary structure, part of the 30S ribosomal subunit.

Its function is as follows. One of the primary rRNA binding proteins, it binds specifically to the 5'-end of 16S ribosomal RNA. In Desulfitobacterium hafniense (strain DSM 10664 / DCB-2), this protein is Small ribosomal subunit protein uS17.